Consider the following 60-residue polypeptide: Large ribosomal subunit protein uL30 (60 aa).

It belongs to the universal ribosomal protein uL30 family. As to quaternary structure, part of the 50S ribosomal subunit.

This is Large ribosomal subunit protein uL30 from Limosilactobacillus reuteri (strain DSM 20016) (Lactobacillus reuteri).